Reading from the N-terminus, the 259-residue chain is Phosphate import ATP-binding protein PstB (259 aa).

Residues 5–248 enclose the ABC transporter domain; it reads IEVNDLNVYY…NIIFSNPSAQ (244 aa). 37–44 is an ATP binding site; that stretch reads GPSGCGKS.

It belongs to the ABC transporter superfamily. Phosphate importer (TC 3.A.1.7) family. The complex is composed of two ATP-binding proteins (PstB), two transmembrane proteins (PstC and PstA) and a solute-binding protein (PstS).

The protein localises to the cell membrane. It catalyses the reaction phosphate(out) + ATP + H2O = ADP + 2 phosphate(in) + H(+). Its function is as follows. Part of the ABC transporter complex PstSACB involved in phosphate import. Responsible for energy coupling to the transport system. The polypeptide is Phosphate import ATP-binding protein PstB (Leifsonia xyli subsp. xyli (strain CTCB07)).